The following is a 475-amino-acid chain: Methylenomycin A resistance protein (475 aa).

The next 14 helical transmembrane spans lie at 28–48, 65–85, 93–113, 123–143, 152–172, 173–193, 212–232, 240–260, 285–305, 314–334, 346–366, 371–391, 416–436, and 439–459; these read ITAL…VNVA, WIVD…GGLA, VYLW…LAPT, VQGA…VFSF, MLGL…TVGG, LMVS…IGAI, LAVP…FALI, TAGP…LLAL, LVGF…GLYF, FQAG…NIVY, LLTA…TITA, WVVA…SPGM, QIGS…TSDW, and GAAI…LSAW.

This sequence belongs to the major facilitator superfamily.

Its subcellular location is the cell membrane. Its function is as follows. Resistance to the epoxide antibiotic methylenomycin A; probably by mediating its efflux. The protein is Methylenomycin A resistance protein (mmr) of Streptomyces coelicolor (strain ATCC BAA-471 / A3(2) / M145).